We begin with the raw amino-acid sequence, 365 residues long: Tubulin-like protein CetZ (365 aa).

Residues 10–14 (QCGTK), 103–105 (GTG), glutamate 136, asparagine 163, and asparagine 181 each bind GTP.

It belongs to the CetZ family.

It is found in the cytoplasm. Functionally, involved in cell shape control. In Pyrococcus horikoshii (strain ATCC 700860 / DSM 12428 / JCM 9974 / NBRC 100139 / OT-3), this protein is Tubulin-like protein CetZ.